The primary structure comprises 355 residues: Agamous-like MADS-box protein AGL81 (355 aa).

Residues Met1 to Ser22 are disordered. One can recognise an MADS-box domain in the interval Thr26 to Arg68. Residues Val162–His174 show a composition bias toward basic and acidic residues. Positions Val162–Thr186 are disordered. A compositionally biased stretch (polar residues) spans Ser176–Thr186.

Interacts with MEE14/CBP1.

It localises to the nucleus. Its function is as follows. Probable transcription factor that may function in the maintenance of the proper function of the central cell in pollen tube attraction. The protein is Agamous-like MADS-box protein AGL81 of Arabidopsis thaliana (Mouse-ear cress).